Consider the following 320-residue polypeptide: D-amino-acid oxidase (320 aa).

Residues G18, G19, V20, I21, T47, T48, S49, G53, G54, L55, V161, and T176 each contribute to the FAD site. Positions 220 and 275 each coordinate D-proline. D-serine-binding residues include Y220 and R275. The FAD site is built by R275, G301, G302, G304, and T306. Residue G302 participates in D-proline binding. G302 contributes to the D-serine binding site.

It belongs to the DAMOX/DASOX family. Requires FAD as cofactor.

The protein resides in the cytoplasm. The protein localises to the secreted. It localises to the cell wall. The catalysed reaction is a D-alpha-amino acid + O2 + H2O = a 2-oxocarboxylate + H2O2 + NH4(+). The enzyme catalyses D-leucine + O2 + H2O = 4-methyl-2-oxopentanoate + H2O2 + NH4(+). It catalyses the reaction D-valine + O2 + H2O = 3-methyl-2-oxobutanoate + H2O2 + NH4(+). It carries out the reaction D-isoleucine + O2 + H2O = (R)-3-methyl-2-oxopentanoate + H2O2 + NH4(+). The catalysed reaction is D-methionine + O2 + H2O = 4-methylsulfanyl-2-oxobutanoate + H2O2 + NH4(+). In terms of biological role, catalyzes the oxidative deamination of D-amino acids with broad substrate specificity. The polypeptide is D-amino-acid oxidase (Streptomyces coelicolor (strain ATCC BAA-471 / A3(2) / M145)).